Consider the following 231-residue polypeptide: Large ribosomal subunit protein uL1 (231 aa).

The protein belongs to the universal ribosomal protein uL1 family. As to quaternary structure, part of the 50S ribosomal subunit.

In terms of biological role, binds directly to 23S rRNA. The L1 stalk is quite mobile in the ribosome, and is involved in E site tRNA release. Functionally, protein L1 is also a translational repressor protein, it controls the translation of the L11 operon by binding to its mRNA. The protein is Large ribosomal subunit protein uL1 of Allorhizobium ampelinum (strain ATCC BAA-846 / DSM 112012 / S4) (Agrobacterium vitis (strain S4)).